Reading from the N-terminus, the 155-residue chain is 6,7-dimethyl-8-ribityllumazine synthase (155 aa).

5-amino-6-(D-ribitylamino)uracil-binding positions include F23, 57 to 59, and 81 to 83; these read AFE and AVI. 86 to 87 is a (2S)-2-hydroxy-3-oxobutyl phosphate binding site; that stretch reads AT. The Proton donor role is filled by H89. F114 is a 5-amino-6-(D-ribitylamino)uracil binding site. R128 is a binding site for (2S)-2-hydroxy-3-oxobutyl phosphate.

The protein belongs to the DMRL synthase family.

It catalyses the reaction (2S)-2-hydroxy-3-oxobutyl phosphate + 5-amino-6-(D-ribitylamino)uracil = 6,7-dimethyl-8-(1-D-ribityl)lumazine + phosphate + 2 H2O + H(+). It functions in the pathway cofactor biosynthesis; riboflavin biosynthesis; riboflavin from 2-hydroxy-3-oxobutyl phosphate and 5-amino-6-(D-ribitylamino)uracil: step 1/2. Catalyzes the formation of 6,7-dimethyl-8-ribityllumazine by condensation of 5-amino-6-(D-ribitylamino)uracil with 3,4-dihydroxy-2-butanone 4-phosphate. This is the penultimate step in the biosynthesis of riboflavin. This is 6,7-dimethyl-8-ribityllumazine synthase from Geotalea uraniireducens (strain Rf4) (Geobacter uraniireducens).